The sequence spans 660 residues: Glycogen debranching enzyme (660 aa).

Residue Asp338 is the Nucleophile of the active site. Residue Glu373 is the Proton donor of the active site. Positions 460–472 are enriched in basic and acidic residues; sequence NEANGEDNRDGAW. Residues 460–482 are disordered; the sequence is NEANGEDNRDGAWENHSNNHGYE.

This sequence belongs to the glycosyl hydrolase 13 family.

The catalysed reaction is Hydrolysis of (1-&gt;6)-alpha-D-glucosidic linkages to branches with degrees of polymerization of three or four glucose residues in limit dextrin.. It functions in the pathway glycan degradation; glycogen degradation. In terms of biological role, removes maltotriose and maltotetraose chains that are attached by 1,6-alpha-linkage to the limit dextrin main chain, generating a debranched limit dextrin. This chain is Glycogen debranching enzyme, found in Cronobacter sakazakii (strain ATCC BAA-894) (Enterobacter sakazakii).